The primary structure comprises 69 residues: DNA-directed RNA polymerase subunit epsilon (69 aa).

It belongs to the RNA polymerase subunit epsilon family. RNAP is composed of a core of 2 alpha, a beta and a beta' subunit. The core is associated with a delta subunit, and at least one of epsilon or omega. When a sigma factor is associated with the core the holoenzyme is formed, which can initiate transcription.

It catalyses the reaction RNA(n) + a ribonucleoside 5'-triphosphate = RNA(n+1) + diphosphate. Its function is as follows. A non-essential component of RNA polymerase (RNAP). The chain is DNA-directed RNA polymerase subunit epsilon from Geobacillus sp. (strain WCH70).